An 867-amino-acid chain; its full sequence is G-protein coupled receptor family C group 6 member A (867 aa).

Residues 1–19 (MDLMSFILLWAGLMKVAEA) form the signal peptide. At 20–566 (SIAQFSQLGA…EYFDWNSGFA (547 aa)) the chain is on the extracellular side. N51, N55, N97, N296, N308, N336, N356, N370, N527, and N547 each carry an N-linked (GlcNAc...) asparagine glycan. The helical transmembrane segment at 567–587 (IVLLILAALGVLLLFFMSALF) threads the bilayer. The Cytoplasmic segment spans residues 588 to 602 (FWQRHSPVVKAAGGP). The helical transmembrane segment at 603–623 (LCHLILVSLLGSFISVVFFVG) threads the bilayer. Topologically, residues 624 to 634 (EPSDLTCRARQ) are extracellular. Residues 635 to 655 (VIFGFSFTLCVSCILVKSLKI) form a helical membrane-spanning segment. The Cytoplasmic segment spans residues 656–675 (LLAFEMNFELKELLCMLYKP). A helical transmembrane segment spans residues 676–696 (YMIVSVGMGVQIIICTVWLTL). Residues 697 to 716 (YKPFKDKEVQTESILLECNE) lie on the Extracellular side of the membrane. The helical transmembrane segment at 717 to 737 (GFYVMFWLMLGYIALLALFCF) threads the bilayer. Topologically, residues 738–754 (TFAYIGRKLPQKYNEAK) are cytoplasmic. A helical membrane pass occupies residues 755 to 775 (FITFSMVICLMAWIIFIPIHV). The Extracellular segment spans residues 776–781 (TTSGKY). A helical transmembrane segment spans residues 782–802 (VPAVEMVVILISNYGILSCHF). Residues 803–867 (LPKSYIILFK…LSFVPEEKHE (65 aa)) are Cytoplasmic-facing.

Belongs to the G-protein coupled receptor 3 family. As to quaternary structure, homodimer; disulfide-linked.

It is found in the cell membrane. Its function is as follows. Olfactory receptor that is activated by amino acids that act as potent odorants in fish. Displays preference for acidic amino acids such as Glu over basic amino acids. The sequence is that of G-protein coupled receptor family C group 6 member A (gprc6a) from Danio rerio (Zebrafish).